Here is a 381-residue protein sequence, read N- to C-terminus: Guanine nucleotide-binding protein subunit alpha-12 (381 aa).

Cys11 carries the S-palmitoyl cysteine lipid modification. The G-alpha domain occupies 56-381; that stretch reads RLVKILLLGA…QENLKDIMLQ (326 aa). Residues 59-72 form a G1 motif region; the sequence is KILLLGAGESGKST. GTP contacts are provided by residues 67–72 and 202–205; these read ESGKST and LLAR. Ser71 provides a ligand contact to Mg(2+). A G2 motif region spans residues 200–208; the sequence is DILLARKAT. Thr208 provides a ligand contact to Mg(2+). Thr208 is modified (phosphothreonine). Residues 223 to 232 form a G3 motif region; sequence FKMVDVGGQR. The G4 motif stretch occupies residues 292 to 299; that stretch reads ILFLNKMD. GTP contacts are provided by residues 296–299 and Ala353; that span reads NKMD. Positions 351–356 are G5 motif; the sequence is TTAIDT.

This sequence belongs to the G-alpha family. G(12) subfamily. As to quaternary structure, g proteins are composed of 3 units; alpha, beta and gamma. The alpha chain contains the guanine nucleotide binding site. Interacts with UBXD5. Interacts (in GTP-bound form) with PPP5C (via TPR repeats); activates PPP5C phosphatase activity and translocates PPP5C to the cell membrane. Interacts with RGS22. Interacts (via N-terminus) with NAPA; the interaction promotes CDH5 localization to plasma membrane. Interacts with CTNND1 (via N-terminus); the interaction regulates CDH1-mediated cell-cell adhesion. Interacts with PPP2R1A; the interaction promotes protein phosphatase 2A activation causing dephosphorylation of MAPT. Interacts (in GTP-bound form) with ARHGEF1. Interacts (in GTP-bound form) with ARHGEF11 (via RGS domain). Interacts (in GTP-bound form) with ARHGEF12 (via RGS domain).

It is found in the cell membrane. The protein resides in the lateral cell membrane. Its subcellular location is the cytoplasm. In terms of biological role, guanine nucleotide-binding proteins (G proteins) are involved as modulators or transducers in various transmembrane signaling systems. Activates effector molecule RhoA by binding and activating RhoGEFs (ARHGEF12/LARG). GNA12-dependent Rho signaling subsequently regulates transcription factor AP-1 (activating protein-1). GNA12-dependent Rho signaling also regulates protein phosphatese 2A activation causing dephosphorylation of its target proteins. Promotes tumor cell invasion and metastasis by activating RhoA/ROCK signaling pathway and up-regulating pro-inflammatory cytokine production. Inhibits CDH1-mediated cell adhesion in process independent from Rho activation. Together with NAPA promotes CDH5 localization to plasma membrane. May play a role in the control of cell migration through the TOR signaling cascade. This is Guanine nucleotide-binding protein subunit alpha-12 (GNA12) from Homo sapiens (Human).